Reading from the N-terminus, the 594-residue chain is APOBEC1 complementation factor (594 aa).

3 consecutive RRM domains span residues 56–134, 136–218, and 231–303; these read CEIF…ASVD, CRLF…WAEP, and KILY…LAKP. Residues 359–408 form a required for nuclear localization region; that stretch reads HFPATKGHLSNRALIRTPSVREIYMNVPVGAAGVRGLGGRGYLAYTGLGR. The residue at position 498 (T498) is a Phosphothreonine.

In terms of assembly, part of the apolipoprotein B mRNA editing complex with APOBEC1. Interacts with TNPO2; TNPO2 may be responsible for transport of A1CF into the nucleus. Interacts with SYNCRIP. Interacts with CELF2/CUGBP2. Interacts with RBM47. In terms of tissue distribution, isoforms 1 and 2 are widely expressed while isoforms 3 and 4 are restricted to liver and small intestine.

Its subcellular location is the nucleus. It localises to the endoplasmic reticulum. The protein localises to the cytoplasm. Its function is as follows. Essential component of the apolipoprotein B mRNA editing enzyme complex which is responsible for the postranscriptional editing of a CAA codon for Gln to a UAA codon for stop in APOB mRNA. Binds to APOB mRNA and is probably responsible for docking the catalytic subunit, APOBEC1, to the mRNA to allow it to deaminate its target cytosine. The complex also seems to protect the edited APOB mRNA from nonsense-mediated decay. This chain is APOBEC1 complementation factor (A1cf), found in Rattus norvegicus (Rat).